Here is a 500-residue protein sequence, read N- to C-terminus: E3 ubiquitin-protein ligase TRIM69 (500 aa).

The necessary for nuclear localization stretch occupies residues 1–152 (MEVSTNPSSN…SVGQSKEFLQ (152 aa)). The segment at 41-82 (CPLCNDWFRDPLMLSCGHNFCEACIQDFWRLQAKETFCPECK) adopts an RING-type zinc-finger fold. A coiled-coil region spans residues 161 to 255 (TEELAIQQGQ…QCLLAKDMLV (95 aa)). The 196-residue stretch at 305-500 (PIQYMVWREM…KEPLHILHPQ (196 aa)) folds into the B30.2/SPRY domain. S341 bears the Phosphoserine mark.

The protein belongs to the TRIM/RBCC family. Homo-multimer; required for antiviral activity. Interacts with PML. In terms of processing, phosphorylated. Phosphorylation is necessary for nuclear localization.

It localises to the cytoplasm. Its subcellular location is the nucleus. The protein resides in the nucleus speckle. It is found in the cytoskeleton. The protein localises to the microtubule organizing center. It localises to the centrosome. The catalysed reaction is S-ubiquitinyl-[E2 ubiquitin-conjugating enzyme]-L-cysteine + [acceptor protein]-L-lysine = [E2 ubiquitin-conjugating enzyme]-L-cysteine + N(6)-ubiquitinyl-[acceptor protein]-L-lysine.. It participates in protein modification; protein ubiquitination. Functionally, E3 ubiquitin ligase that plays an important role in antiviral immunity by restricting different viral infections including dengue virus or vesicular stomatitis indiana virus. Ubiquitinates viral proteins such as dengue virus NS3 thereby limiting infection. In addition, acts as a key mediator of type I interferon induced microtubule stabilization by directly associating to microtubules independently of its E3 ligase activity. Also plays a role in cataract formation together with TP53. Mechanistically, inhibits UVB-induced cell apoptosis and reactive oxygen species (ROS) production by inducing TP53 ubiquitination. Regulates centrosome dynamics and mitotic progression by ubiquitinating STK3/MST2; leading to its redistribution to the perinuclear cytoskeleton and subsequent phosphorylation by PLK1. This is E3 ubiquitin-protein ligase TRIM69 (TRIM69) from Homo sapiens (Human).